A 379-amino-acid polypeptide reads, in one-letter code: Peritrophin-48 (379 aa).

Positions 1–20 are cleaved as a signal peptide; the sequence is MKAKTLTATLALILLAFAQA. Chitin-binding type-2 domains lie at 25–83 and 86–143; these read ASYC…NCFF and ANPC…NTGN. 2 disulfide bridges follow: Cys60/Cys73 and Cys120/Cys133. Residues Asn150 and Asn168 are each glycosylated (N-linked (GlcNAc...) asparagine). 3 Chitin-binding type-2 domains span residues 151–208, 224–283, and 285–356; these read LSVC…ACSR, TSPC…RTLK, and CNRC…ACEN. Cys185 and Cys198 are disulfide-bonded. N-linked (GlcNAc...) asparagine glycosylation is found at Asn247 and Asn252. Cysteines 324 and 337 form a disulfide. Residues Asn341, Asn356, and Asn373 are each glycosylated (N-linked (GlcNAc...) asparagine).

Glycosylated. As to expression, larval peritrophic membrane.

Functionally, binds chitin and may bind related oligosaccharide structures. This chain is Peritrophin-48, found in Chrysomya bezziana (Old world screw-worm fly).